The following is a 514-amino-acid chain: Protein nucleotidyltransferase YdiU (514 aa).

ATP-binding residues include Gly111, Gly113, Arg114, Lys134, Asp146, Gly147, Arg197, and Arg204. The Proton acceptor role is filled by Asp276. Mg(2+) contacts are provided by Asn277 and Asp286. Position 286 (Asp286) interacts with ATP.

This sequence belongs to the SELO family. It depends on Mg(2+) as a cofactor. Requires Mn(2+) as cofactor.

It catalyses the reaction L-seryl-[protein] + ATP = 3-O-(5'-adenylyl)-L-seryl-[protein] + diphosphate. The catalysed reaction is L-threonyl-[protein] + ATP = 3-O-(5'-adenylyl)-L-threonyl-[protein] + diphosphate. The enzyme catalyses L-tyrosyl-[protein] + ATP = O-(5'-adenylyl)-L-tyrosyl-[protein] + diphosphate. It carries out the reaction L-histidyl-[protein] + UTP = N(tele)-(5'-uridylyl)-L-histidyl-[protein] + diphosphate. It catalyses the reaction L-seryl-[protein] + UTP = O-(5'-uridylyl)-L-seryl-[protein] + diphosphate. The catalysed reaction is L-tyrosyl-[protein] + UTP = O-(5'-uridylyl)-L-tyrosyl-[protein] + diphosphate. Its function is as follows. Nucleotidyltransferase involved in the post-translational modification of proteins. It can catalyze the addition of adenosine monophosphate (AMP) or uridine monophosphate (UMP) to a protein, resulting in modifications known as AMPylation and UMPylation. In Rhodococcus jostii (strain RHA1), this protein is Protein nucleotidyltransferase YdiU.